We begin with the raw amino-acid sequence, 334 residues long: Ornithine carbamoyltransferase, catabolic (334 aa).

Residues 57-60 (STRT), Q84, R108, and 135-138 (HPTQ) each bind carbamoyl phosphate. L-ornithine is bound by residues N168, D232, and 236–237 (SM). Carbamoyl phosphate-binding positions include 274-275 (CL) and R321.

This sequence belongs to the aspartate/ornithine carbamoyltransferase superfamily. OTCase family.

The protein localises to the cytoplasm. It carries out the reaction carbamoyl phosphate + L-ornithine = L-citrulline + phosphate + H(+). The protein operates within amino-acid degradation; L-arginine degradation via ADI pathway; carbamoyl phosphate from L-arginine: step 2/2. Its function is as follows. Reversibly catalyzes the transfer of the carbamoyl group from carbamoyl phosphate (CP) to the N(epsilon) atom of ornithine (ORN) to produce L-citrulline. The sequence is that of Ornithine carbamoyltransferase, catabolic (arcB) from Haemophilus influenzae (strain ATCC 51907 / DSM 11121 / KW20 / Rd).